Here is a 494-residue protein sequence, read N- to C-terminus: Alpha-amylase-related protein (494 aa).

An N-terminal signal peptide occupies residues methionine 1–alanine 20. Residue glutamine 21 is modified to Pyrrolidone carboxylic acid. Cysteine 48 and cysteine 104 are disulfide-bonded. Asparagine 118, glutamine 169, and aspartate 178 together coordinate Ca(2+). Cysteine 157 and cysteine 171 form a disulfide bridge. Arginine 206 is a binding site for chloride. Aspartate 208 functions as the Nucleophile in the catalytic mechanism. Residue histidine 212 participates in Ca(2+) binding. Glutamate 245 functions as the Proton donor in the catalytic mechanism. The chloride site is built by asparagine 308 and arginine 343. Disulfide bonds link cysteine 376–cysteine 382, cysteine 418–cysteine 441, and cysteine 448–cysteine 460.

It belongs to the glycosyl hydrolase 13 family. In terms of assembly, monomer. It depends on Ca(2+) as a cofactor. The cofactor is chloride.

Its subcellular location is the secreted. It carries out the reaction Endohydrolysis of (1-&gt;4)-alpha-D-glucosidic linkages in polysaccharides containing three or more (1-&gt;4)-alpha-linked D-glucose units.. This is Alpha-amylase-related protein (Amyrel) from Drosophila bipectinata (Fruit fly).